Here is a 194-residue protein sequence, read N- to C-terminus: Pyridoxine/pyridoxamine 5'-phosphate oxidase (194 aa).

Residues 42–47 (RVVLLK), 57–58 (FT), arginine 63, lysine 64, and glutamine 86 each bind FMN. Lysine 47 provides a ligand contact to substrate. Substrate-binding residues include tyrosine 104, arginine 108, and serine 112. FMN is bound by residues 121 to 122 (QS) and tryptophan 166. Residue 172–174 (RIH) coordinates substrate. Arginine 176 is a binding site for FMN.

This sequence belongs to the pyridoxamine 5'-phosphate oxidase family. As to quaternary structure, homodimer. Requires FMN as cofactor.

It catalyses the reaction pyridoxamine 5'-phosphate + O2 + H2O = pyridoxal 5'-phosphate + H2O2 + NH4(+). The enzyme catalyses pyridoxine 5'-phosphate + O2 = pyridoxal 5'-phosphate + H2O2. Its pathway is cofactor metabolism; pyridoxal 5'-phosphate salvage; pyridoxal 5'-phosphate from pyridoxamine 5'-phosphate: step 1/1. It participates in cofactor metabolism; pyridoxal 5'-phosphate salvage; pyridoxal 5'-phosphate from pyridoxine 5'-phosphate: step 1/1. Catalyzes the oxidation of either pyridoxine 5'-phosphate (PNP) or pyridoxamine 5'-phosphate (PMP) into pyridoxal 5'-phosphate (PLP). The sequence is that of Pyridoxine/pyridoxamine 5'-phosphate oxidase from Ehrlichia ruminantium (strain Welgevonden).